Consider the following 947-residue polypeptide: DNA mismatch repair protein MutS (947 aa).

620 to 627 (GPNMSGKS) contributes to the ATP binding site.

Belongs to the DNA mismatch repair MutS family.

Functionally, this protein is involved in the repair of mismatches in DNA. It is possible that it carries out the mismatch recognition step. This protein has a weak ATPase activity. The polypeptide is DNA mismatch repair protein MutS (Clostridioides difficile (strain 630) (Peptoclostridium difficile)).